The chain runs to 339 residues: Transmembrane protein 120B (339 aa).

Residues 1–77 (MSGQLERCER…ASREEAELVQ (77 aa)) are a coiled coil. 6 helical membrane-spanning segments follow: residues 102–124 (GLYL…AKFA), 132–152 (FKLY…FFLH), 159–179 (VFNF…SILI), 187–207 (GWWV…LTWP), 270–290 (FLLP…VTLF), and 302–322 (QVFV…LTTL).

Belongs to the TMEM120 family. In terms of assembly, heterooligomer with TMEM120A.

It localises to the nucleus inner membrane. Necessary for efficient adipogenesis. Does not show ion channel activity. The polypeptide is Transmembrane protein 120B (TMEM120B) (Bos taurus (Bovine)).